Here is a 271-residue protein sequence, read N- to C-terminus: 4-hydroxy-tetrahydrodipicolinate reductase (271 aa).

Residues 10 to 15, Glu-36, 100 to 102, and 124 to 127 contribute to the NAD(+) site; these read GAGGRM, GTT, and SGNM. His-157 (proton donor/acceptor) is an active-site residue. His-158 lines the (S)-2,3,4,5-tetrahydrodipicolinate pocket. The active-site Proton donor is Lys-161. 167–168 is a (S)-2,3,4,5-tetrahydrodipicolinate binding site; that stretch reads GT.

Belongs to the DapB family.

Its subcellular location is the cytoplasm. It carries out the reaction (S)-2,3,4,5-tetrahydrodipicolinate + NAD(+) + H2O = (2S,4S)-4-hydroxy-2,3,4,5-tetrahydrodipicolinate + NADH + H(+). The catalysed reaction is (S)-2,3,4,5-tetrahydrodipicolinate + NADP(+) + H2O = (2S,4S)-4-hydroxy-2,3,4,5-tetrahydrodipicolinate + NADPH + H(+). It participates in amino-acid biosynthesis; L-lysine biosynthesis via DAP pathway; (S)-tetrahydrodipicolinate from L-aspartate: step 4/4. In terms of biological role, catalyzes the conversion of 4-hydroxy-tetrahydrodipicolinate (HTPA) to tetrahydrodipicolinate. This is 4-hydroxy-tetrahydrodipicolinate reductase from Rhodopseudomonas palustris (strain BisB18).